Reading from the N-terminus, the 265-residue chain is Putative hydro-lyase PA2116 (265 aa).

This sequence belongs to the D-glutamate cyclase family.

This Pseudomonas aeruginosa (strain ATCC 15692 / DSM 22644 / CIP 104116 / JCM 14847 / LMG 12228 / 1C / PRS 101 / PAO1) protein is Putative hydro-lyase PA2116.